The chain runs to 775 residues: Semaphorin-3E (775 aa).

Residues 1–25 (MAPAGHILTLLLWGHLLELWTPGHS) form the signal peptide. One can recognise a Sema domain in the interval 32–516 (RLRLSHKELL…SASAVAQVRF (485 aa)). The N-linked (GlcNAc...) asparagine glycan is linked to N44. A disulfide bridge links C105 with C115. A glycan (N-linked (GlcNAc...) asparagine) is linked at N126. The cysteines at positions 133 and 142 are disulfide-linked. N-linked (GlcNAc...) asparagine glycosylation is found at N175 and N330. Disulfide bonds link C270-C382, C294-C342, and C519-C537. The 89-residue stretch at 581-669 (ALDRTEERLA…NFVHTVRKIT (89 aa)) folds into the Ig-like C2-type domain. N-linked (GlcNAc...) asparagine glycosylation occurs at N596. C654 and C729 are oxidised to a cystine.

This sequence belongs to the semaphorin family. In terms of assembly, interacts with PLXND1. Detected in neurons in the thalamus. Detected in embryonic vasculature. Developing lungs, developing skeletal elements and ventral horns of the developing neural tube. Correlates positively with tumor progression.

Its subcellular location is the secreted. In terms of biological role, plays an important role in signaling via the cell surface receptor PLXND1. Mediates reorganization of the actin cytoskeleton, leading to the retraction of cell projections. Promotes focal adhesion disassembly and inhibits adhesion of endothelial cells to the extracellular matrix. Regulates angiogenesis, both during embryogenesis and after birth. Can down-regulate sprouting angiogenesis. Required for normal vascular patterning during embryogenesis. Plays an important role in ensuring the specificity of synapse formation. The polypeptide is Semaphorin-3E (Sema3e) (Mus musculus (Mouse)).